The primary structure comprises 334 residues: Aspartate carbamoyltransferase catalytic subunit (334 aa).

Arg70 and Thr71 together coordinate carbamoyl phosphate. Lys98 provides a ligand contact to L-aspartate. 3 residues coordinate carbamoyl phosphate: Arg120, His150, and Gln153. 2 residues coordinate L-aspartate: Arg183 and Arg239. Gly280 and Pro281 together coordinate carbamoyl phosphate.

It belongs to the aspartate/ornithine carbamoyltransferase superfamily. ATCase family. In terms of assembly, heterododecamer (2C3:3R2) of six catalytic PyrB chains organized as two trimers (C3), and six regulatory PyrI chains organized as three dimers (R2).

The catalysed reaction is carbamoyl phosphate + L-aspartate = N-carbamoyl-L-aspartate + phosphate + H(+). It participates in pyrimidine metabolism; UMP biosynthesis via de novo pathway; (S)-dihydroorotate from bicarbonate: step 2/3. Its function is as follows. Catalyzes the condensation of carbamoyl phosphate and aspartate to form carbamoyl aspartate and inorganic phosphate, the committed step in the de novo pyrimidine nucleotide biosynthesis pathway. The polypeptide is Aspartate carbamoyltransferase catalytic subunit (Pseudomonas paraeruginosa (strain DSM 24068 / PA7) (Pseudomonas aeruginosa (strain PA7))).